The following is a 916-amino-acid chain: Isoleucine--tRNA ligase (916 aa).

A 'HIGH' region motif is present at residues 57-67 (PYANGNLHMGH). L-isoleucyl-5'-AMP is bound at residue E554. A 'KMSKS' region motif is present at residues 595-599 (KMSKS). K598 provides a ligand contact to ATP. Residues C885, C888, C905, and C908 each coordinate Zn(2+).

This sequence belongs to the class-I aminoacyl-tRNA synthetase family. IleS type 1 subfamily. In terms of assembly, monomer. Zn(2+) serves as cofactor.

Its subcellular location is the cytoplasm. The catalysed reaction is tRNA(Ile) + L-isoleucine + ATP = L-isoleucyl-tRNA(Ile) + AMP + diphosphate. Functionally, catalyzes the attachment of isoleucine to tRNA(Ile). As IleRS can inadvertently accommodate and process structurally similar amino acids such as valine, to avoid such errors it has two additional distinct tRNA(Ile)-dependent editing activities. One activity is designated as 'pretransfer' editing and involves the hydrolysis of activated Val-AMP. The other activity is designated 'posttransfer' editing and involves deacylation of mischarged Val-tRNA(Ile). This Staphylococcus epidermidis (strain ATCC 35984 / DSM 28319 / BCRC 17069 / CCUG 31568 / BM 3577 / RP62A) protein is Isoleucine--tRNA ligase (ileS).